Here is a 228-residue protein sequence, read N- to C-terminus: NAD(P)H-hydrate epimerase (228 aa).

Positions 9–209 constitute a YjeF N-terminal domain; that stretch reads VRAVERLAHR…LLGLTPAFLA (201 aa). 53 to 57 is a binding site for (6S)-NADPHX; that stretch reads NNGGD. K(+)-binding residues include asparagine 54 and aspartate 115. (6S)-NADPHX-binding positions include 119–125 and aspartate 148; that span reads GIGLARP. Serine 151 is a K(+) binding site.

Belongs to the NnrE/AIBP family. K(+) serves as cofactor.

It catalyses the reaction (6R)-NADHX = (6S)-NADHX. It carries out the reaction (6R)-NADPHX = (6S)-NADPHX. Its function is as follows. Catalyzes the epimerization of the S- and R-forms of NAD(P)HX, a damaged form of NAD(P)H that is a result of enzymatic or heat-dependent hydration. This is a prerequisite for the S-specific NAD(P)H-hydrate dehydratase to allow the repair of both epimers of NAD(P)HX. This Bordetella pertussis (strain CS) protein is NAD(P)H-hydrate epimerase.